The primary structure comprises 840 residues: MHLVAGDSPGSGPHLPATAFIIPASSATLGLPSSALDVSCFPREPIHVGAPEQVAGCEPVSATVLPQLSAGPASSSTSTVRLLEWTEAAAPPPGGGLRFRISEYKPLNMAGVEQPPSPELRQEGVTEYEDGGAPAGDGEAGPQQAEDHPQNPPEDPNQDPPEDDSTCQCQACGPHQAAGPDLGSSNDGCPQLFQERSVIVENSSGSTSASELLKPMKKRKRREYQSPSEEESEPEAMEKQEEGKDPEGQPTASTPESEEWSSSQPATGEKKECWSWESYLEEQKAITAPVSLFQDSQAVTHNKNGFKLGMKLEGIDPQHPSMYFILTVAEVCGYRLRLHFDGYSECHDFWVNANSPDIHPAGWFEKTGHKLQPPKGYKEEEFSWSQYLRSTRAQAAPKHLFVSQSHSPPPLGFQVGMKLEAVDRMNPSLVCVASVTDVVDSRFLVHFDNWDDTYDYWCDPSSPYIHPVGWCQKQGKPLTPPQDYPDPDNFCWEKYLEETGASAVPTWAFKVRPPHSFLVNMKLEAVDRRNPALIRVASVEDVEDHRIKIHFDGWSHGYDFWIDADHPDIHPAGWCSKTGHPLQPPLGPREPSSASPGGCPPLSYRSLPHTRTSKYSFHHRKCPTPGCDGSGHVTGKFTAHHCLSGCPLAERNQSRLKAELSDSEASARKKNLSGFSPRKKPRHHGRIGRPPKYRKIPQEDFQTLTPDVVHQSLFMSALSAHPDRSLSVCWEQHCKLLPGVAGISASTVAKWTIDEVFGFVQTLTGCEDQARLFKDEARIVRVTHVSGKTLVWTVAQLGDLVCSDHLQEGKGILETGVHSLLCSLPTHLLAKLSFASDSQY.

Ser117 carries the post-translational modification Phosphoserine. The segment at 127–269 (EYEDGGAPAG…WSSSQPATGE (143 aa)) is disordered. Residues 156–165 (PNQDPPEDDS) show a composition bias toward acidic residues. Polar residues predominate over residues 200 to 210 (VENSSGSTSAS). Over residues 236–247 (AMEKQEEGKDPE) the composition is skewed to basic and acidic residues. Residues 250-266 (PTASTPESEEWSSSQPA) show a composition bias toward polar residues. MBT repeat units follow at residues 274 to 374 (WSWE…LQPP), 382 to 481 (FSWS…LTPP), and 490 to 585 (FCWE…LQPP). The interval 447-454 (FDNWDDTY) is interaction with monomethylated and dimethylated peptides. The segment at 580 to 605 (HPLQPPLGPREPSSASPGGCPPLSYR) is disordered. The CCHHC-type zinc finger occupies 613–656 (SKYSFHHRKCPTPGCDGSGHVTGKFTAHHCLSGCPLAERNQSRL). Zn(2+) is bound by residues Cys622, Cys627, His640, and Cys646. A disordered region spans residues 657-697 (KAELSDSEASARKKNLSGFSPRKKPRHHGRIGRPPKYRKIP). A compositionally biased stretch (basic residues) spans 677–695 (PRKKPRHHGRIGRPPKYRK).

In terms of assembly, homodimer. Interacts with RB1/RB (when monomethylated at 'Lys-860'). Interacts with p53/TP53 (when monomethylated at 'Lys-382'). Interacts with CBX3, ETV6, KMT5A and VCP/p97. Ubiquitinated in a VCP/p97-dependent way following DNA damage, leading to its removal from DNA damage sites, promoting accessibility of H4K20me2 mark for DNA repair protein TP53BP1, which is then recruited to DNA damage sites. Widely expressed. Expression is reduced in colorectal cancer cell line SW480 and promyelocytic leukemia cell line HL-60.

Its subcellular location is the nucleus. In terms of biological role, polycomb group (PcG) protein that specifically recognizes and binds mono- and dimethyllysine residues on target proteins, thereby acting as a 'reader' of a network of post-translational modifications. PcG proteins maintain the transcriptionally repressive state of genes: acts as a chromatin compaction factor by recognizing and binding mono- and dimethylated histone H1b/H1-4 at 'Lys-26' (H1bK26me1 and H1bK26me2) and histone H4 at 'Lys-20' (H4K20me1 and H4K20me2), leading to condense chromatin and repress transcription. Recognizes and binds p53/TP53 monomethylated at 'Lys-382', leading to repress p53/TP53-target genes. Also recognizes and binds RB1/RB monomethylated at 'Lys-860'. Participates in the ETV6-mediated repression. Probably plays a role in cell proliferation. Overexpression induces multinucleated cells, suggesting that it is required to accomplish normal mitosis. This is Lethal(3)malignant brain tumor-like protein 1 (L3MBTL1) from Homo sapiens (Human).